Here is a 257-residue protein sequence, read N- to C-terminus: Phosphonates import ATP-binding protein PhnC (257 aa).

One can recognise an ABC transporter domain in the interval 2 to 246; that stretch reads IEFRNVSKVY…KFAEIYGDVA (245 aa). 35 to 42 serves as a coordination point for ATP; that stretch reads GLSGAGKS.

It belongs to the ABC transporter superfamily. Phosphonates importer (TC 3.A.1.9.1) family. In terms of assembly, the complex is composed of two ATP-binding proteins (PhnC), two transmembrane proteins (PhnE) and a solute-binding protein (PhnD).

The protein resides in the cell membrane. It carries out the reaction phosphonate(out) + ATP + H2O = phosphonate(in) + ADP + phosphate + H(+). Functionally, part of the ABC transporter complex PhnCDE involved in phosphonates import. Responsible for energy coupling to the transport system. The polypeptide is Phosphonates import ATP-binding protein PhnC (Bacillus thuringiensis subsp. konkukian (strain 97-27)).